The primary structure comprises 66 residues: Pteroicidin-alpha (66 aa).

Positions 1–22 are cleaved as a signal peptide; that stretch reads MKCIALFLVLSMVVLMAEPGEA. Arginine 43 bears the Arginine amide; partial mark. Positions 44–66 are excised as a propeptide; the sequence is GKNRDMAEQQELERAFDRERAFA.

This sequence belongs to the pleurocidin family. In terms of processing, this peptide exists in N-terminally amidated and non-amidated forms. The amidated form is more active and has a greater alpha-helix content than the non-amidated form. As to expression, expressed in gill, skin, intestine, spleen, anterior kidney, and blood cells.

The protein resides in the secreted. In terms of biological role, the amidated peptide is bactericidal on human pathogens like S.aureus or E.coli, as well as on the fish pathogen A.salmonicida. May also be active against a variety of fungi. It can kill bacteria in less than 30 minutes (S.aureus) and 120 minutes (V.vulnificus). It induces hemolysis of erythrocytes from human and fishes (sea bass and lesser-spotted dogfish). Its function is as follows. The non-amidated peptide only inhibits growth of human pathogens like S.aureus or E.coli, and the fish pathogen A.salmonicida. Induces hemolysis of erythrocytes from human and fishes (sea bass and lesser-spotted dogfish). The sequence is that of Pteroicidin-alpha from Pterois volitans (Red lionfish).